A 485-amino-acid chain; its full sequence is Protein hunchback (485 aa).

The disordered stretch occupies residues 1–77 (TSSTARKTPE…EEDDDIRTPK (77 aa)). The segment covering 16 to 37 (QDQNQLLKTPIQTNGNQQSTFD) has biased composition (polar residues). Acidic residues predominate over residues 59 to 72 (ADVDDENDAEEDDD). 4 consecutive C2H2-type zinc fingers follow at residues 87–109 (YKCK…NRIH), 116–138 (LKCQ…LRNH), 144–166 (FQCK…MKSH), and 172–196 (YRCK…KYSH). Disordered stretches follow at residues 229–270 (KDEG…PPSS), 318–361 (NGWQ…QVKH), and 398–422 (PKPV…EDDS). Over residues 257–270 (NFEQSQHVPTPPSS) the composition is skewed to polar residues. A compositionally biased stretch (acidic residues) spans 325 to 335 (NCNEEETPEKE). Residues 345–358 (DLSSNPSTPSTVSQ) show a composition bias toward polar residues. Over residues 402-416 (QLQLPTSSTTTPLKT) the composition is skewed to low complexity. 2 consecutive C2H2-type zinc fingers follow at residues 432–454 (YECK…MGYH) and 460–484 (FKCN…RDAH).

The protein belongs to the hunchback C2H2-type zinc-finger protein family.

It localises to the nucleus. Gap class segmentation protein that controls development of head structures. The protein is Protein hunchback (hb) of Clogmia albipunctata (Mothmidge).